Consider the following 259-residue polypeptide: Adenosylcobinamide-GDP ribazoletransferase (259 aa).

6 helical membrane passes run 9 to 29 (NLFF…WIEV), 43 to 63 (LVGL…LYWV), 64 to 84 (SPSI…GGFH), 118 to 138 (ALAL…LALF), 143 to 163 (VSLA…SFIF), and 190 to 210 (ILLA…ALVL).

It belongs to the CobS family. It depends on Mg(2+) as a cofactor.

Its subcellular location is the cell inner membrane. The enzyme catalyses alpha-ribazole + adenosylcob(III)inamide-GDP = adenosylcob(III)alamin + GMP + H(+). It catalyses the reaction alpha-ribazole 5'-phosphate + adenosylcob(III)inamide-GDP = adenosylcob(III)alamin 5'-phosphate + GMP + H(+). The protein operates within cofactor biosynthesis; adenosylcobalamin biosynthesis; adenosylcobalamin from cob(II)yrinate a,c-diamide: step 7/7. In terms of biological role, joins adenosylcobinamide-GDP and alpha-ribazole to generate adenosylcobalamin (Ado-cobalamin). Also synthesizes adenosylcobalamin 5'-phosphate from adenosylcobinamide-GDP and alpha-ribazole 5'-phosphate. This Shewanella pealeana (strain ATCC 700345 / ANG-SQ1) protein is Adenosylcobinamide-GDP ribazoletransferase.